A 377-amino-acid chain; its full sequence is Guanine nucleotide-binding protein subunit beta (377 aa).

7 WD repeats span residues 63-93, 105-135, 154-185, 202-233, 246-276, 292-323, and 339-369; these read GHTGKVYSLDWTPERNRIVSASQDGRLIVWN, LPCAWVMTCAFSPNGQSVACGGLDSVCSIFS, GHRGYVSCCQYVPNEDAHLITSSGDQTCILWD, GHTADVLSVSISGSNPNWFISGSCDSTARLWD, GHEGDVNTVKFFPDGYRFGTGSDDGTCRLYD, GENGPVTSIAFSVSGRLLFAGYASNNTCYVWD, and SHRNRISCLGLSADGSALCTGSWDSNLKIWA. 2 short sequence motifs (DWD box) span residues 220–235 and 263–278; these read FISGSCDSTARLWDTR and FGTGSDDGTCRLYDIR.

It belongs to the WD repeat G protein beta family. In terms of assembly, g proteins are composed of 3 units, alpha, beta and gamma. Interacts with the gamma subunits GG1 and GG2. The dimers GB1-GG1 and GB1-GG2 interact with NDL1, NDL2 and NDL3. Interacts with WNK8. Interacts with XLG2. Interacts with RACK1A, RACK1B and RACK1C. Interacts with ZAR1 (via GBeta-binding domain). Expressed in seedlings (especially at the hypocotyl/root junction), roots, leaves (restricted to veins and guard cells), and flowers. Also present in hydathods. Expressed in guard cells, mesophyll tissue of cotyledons, trichomes and whole siliques, but not in seeds.

It localises to the cell membrane. The protein resides in the cytoplasm. It is found in the nucleus. In terms of biological role, guanine nucleotide-binding proteins (G proteins) are involved as a modulator or transducer in various transmembrane signaling systems. The beta and gamma chains are required for the GTPase activity, for replacement of GDP by GTP, and for G protein-effector interaction. The heterotrimeric G-protein controls defense responses to necrotrophic and vascular fungi probably by modulating cell wall-related genes expression (e.g. lower xylose content in cell walls); involved in resistance to fungal pathogens such as Alternaria brassicicola and Fusarium oxysporum. Modulates root architecture (e.g. lateral root formation). Acts with XGL3 in the positive regulation of root waving and root skewing. Involved in the asymmetric division of zygote and specification of apical and basal cell lineages. The sequence is that of Guanine nucleotide-binding protein subunit beta (GB1) from Arabidopsis thaliana (Mouse-ear cress).